We begin with the raw amino-acid sequence, 310 residues long: Ribosome production factor 2 homolog (310 aa).

In terms of domain architecture, Brix spans lysine 29–serine 239. Residues leucine 281–glutamate 310 form a disordered region. Residues alanine 295–glutamate 310 are compositionally biased toward basic residues.

Belongs to the RPF2 family.

Its subcellular location is the nucleus. It is found in the nucleolus. The protein is Ribosome production factor 2 homolog of Oryza sativa subsp. japonica (Rice).